Reading from the N-terminus, the 176-residue chain is NAD(P)H-quinone oxidoreductase subunit 6, chloroplastic (176 aa).

The next 5 helical transmembrane spans lie at 10–30 (ILLVFLGSGLILGGLGVVLFT), 32–52 (PIYSAFSLGLVFVCISLFYIP), 61–81 (AQLLIYVGAVNVLIVFAVMFM), 90–112 (FHLWTVGDGITSLVCTSILFSLI), and 152–172 (FYLPFELTSIILLVALIGAIA).

Belongs to the complex I subunit 6 family. In terms of assembly, NDH is composed of at least 16 different subunits, 5 of which are encoded in the nucleus.

Its subcellular location is the plastid. The protein localises to the chloroplast thylakoid membrane. The catalysed reaction is a plastoquinone + NADH + (n+1) H(+)(in) = a plastoquinol + NAD(+) + n H(+)(out). It carries out the reaction a plastoquinone + NADPH + (n+1) H(+)(in) = a plastoquinol + NADP(+) + n H(+)(out). Its function is as follows. NDH shuttles electrons from NAD(P)H:plastoquinone, via FMN and iron-sulfur (Fe-S) centers, to quinones in the photosynthetic chain and possibly in a chloroplast respiratory chain. The immediate electron acceptor for the enzyme in this species is believed to be plastoquinone. Couples the redox reaction to proton translocation, and thus conserves the redox energy in a proton gradient. This chain is NAD(P)H-quinone oxidoreductase subunit 6, chloroplastic (ndhG), found in Ceratophyllum demersum (Rigid hornwort).